Here is a 510-residue protein sequence, read N- to C-terminus: MIWHVQNENFILDSTRIFMKAFHLLLFDGSLIFPECILIFGLILLLMIDSTSDQKDLPWFYFISSTSLVMSITALLFRWREEPMISFSGNFQTNNFNEIFQFLILLCSTLCIPLSVEYIECTEMAITEFLLFVLTATLGGMFLCGANDLITIFVAPECFSFCSYLLSGYTKKDVRSNEATMKYLLMGGASSSILVHAFSWLYGSSGGEIELQEIVNGLINTQMYNSPGISIALLFITVGIGFKLSPAPSHQWTPDVYEGSPTPVVAFLSVTSKVAASASATRIFDIPFYFSSNEWHLLLEILAILSMILGNIIAITQTSMKRMLAYSSIGQIGYVIIGIIVGDSNDGYASMITYMLFYISMNLGTFACIVLFGLRTGTDNIRDYAGLYTKDPFLALSLALCLLSLGGLPPLAGFFGKLYLFRCGWQAGLYSLVLIGLLTSVVSIYYYLKIIKLLMTGRNQEITPHVRNYRRSPLRSNNSIELSMIVCVIASTIPGISMNPIIAIAQDTLF.

13 consecutive transmembrane segments (helical) span residues 24-44, 57-77, 99-119, 124-144, 149-169, 183-203, 227-247, 295-315, 323-343, 354-374, 395-415, 428-448, and 484-504; these read LLLF…GLIL, LPWF…ALLF, IFQF…VEYI, MAIT…MFLC, LITI…LSGY, YLLM…WLYG, PGIS…LSPA, WHLL…IIAI, MLAY…IVGD, YMLF…LFGL, ALSL…AGFF, GLYS…YYYL, and MIVC…IIAI.

Belongs to the complex I subunit 2 family. In terms of assembly, NDH is composed of at least 16 different subunits, 5 of which are encoded in the nucleus.

Its subcellular location is the plastid. It localises to the chloroplast thylakoid membrane. It carries out the reaction a plastoquinone + NADH + (n+1) H(+)(in) = a plastoquinol + NAD(+) + n H(+)(out). It catalyses the reaction a plastoquinone + NADPH + (n+1) H(+)(in) = a plastoquinol + NADP(+) + n H(+)(out). In terms of biological role, NDH shuttles electrons from NAD(P)H:plastoquinone, via FMN and iron-sulfur (Fe-S) centers, to quinones in the photosynthetic chain and possibly in a chloroplast respiratory chain. The immediate electron acceptor for the enzyme in this species is believed to be plastoquinone. Couples the redox reaction to proton translocation, and thus conserves the redox energy in a proton gradient. This chain is NAD(P)H-quinone oxidoreductase subunit 2 B, chloroplastic, found in Jasminum nudiflorum (Winter jasmine).